Here is a 210-residue protein sequence, read N- to C-terminus: Thymidylate kinase (210 aa).

Residue 11–18 (GVDGAGKT) coordinates ATP.

Belongs to the thymidylate kinase family.

It carries out the reaction dTMP + ATP = dTDP + ADP. In terms of biological role, phosphorylation of dTMP to form dTDP in both de novo and salvage pathways of dTTP synthesis. The protein is Thymidylate kinase (tmk) of Mycoplasma genitalium (strain ATCC 33530 / DSM 19775 / NCTC 10195 / G37) (Mycoplasmoides genitalium).